We begin with the raw amino-acid sequence, 289 residues long: Ribosome-inactivating protein alpha-trichosanthin (289 aa).

An N-terminal signal peptide occupies residues 1–23 (MIRFLVLSLLILTLFLTTPAVEG). Residue glutamate 183 is part of the active site. The propeptide at 271 to 289 (AMDDDVPMTQSFGCGSYAI) is removed in mature form.

It belongs to the ribosome-inactivating protein family. Type 1 RIP subfamily.

It catalyses the reaction Endohydrolysis of the N-glycosidic bond at one specific adenosine on the 28S rRNA.. In terms of biological role, inactivates eukaryotic 60S ribosomal subunits. In Trichosanthes kirilowii (Chinese snake gourd), this protein is Ribosome-inactivating protein alpha-trichosanthin.